Here is a 305-residue protein sequence, read N- to C-terminus: Uracil-DNA glycosylase (305 aa).

Residue Asp148 is the Proton acceptor of the active site.

It belongs to the uracil-DNA glycosylase (UDG) superfamily. UNG family.

Its subcellular location is the host nucleus. The enzyme catalyses Hydrolyzes single-stranded DNA or mismatched double-stranded DNA and polynucleotides, releasing free uracil.. In terms of biological role, excises uracil residues from the DNA which can arise as a result of misincorporation of dUMP residues by DNA polymerase or deamination of cytosines. Therefore may reduce deleterious uracil incorporation into the viral genome, particularly in terminally differentiated cells which lack DNA repair enzymes. The protein is Uracil-DNA glycosylase of Varicella-zoster virus (strain Dumas) (HHV-3).